The following is a 1297-amino-acid chain: Probable bifunctional E2/E3 enzyme R795 (1297 aa).

Residues 74–128 (CAICRYQENEPCIEHKSSESNTKCPIAQSVSCSHSFHACCISRWLHTKKTCPLCN) form an RING-type; atypical zinc finger. One can recognise a U-box domain in the interval 678 to 750 (EPLQEFLCPI…RDWKENNTVI (73 aa)). Residues 899-1082 (EMTLEIHSSN…LDIMELETMI (184 aa)) form the VWFA domain. The UBC core domain occupies 1133–1279 (QKLIRVQREI…IIDYVNKFAL (147 aa)). Catalysis depends on cysteine 1217, which acts as the Glycyl thioester intermediate.

In the C-terminal section; belongs to the ubiquitin-conjugating enzyme family.

It carries out the reaction S-ubiquitinyl-[E2 ubiquitin-conjugating enzyme]-L-cysteine + [acceptor protein]-L-lysine = [E2 ubiquitin-conjugating enzyme]-L-cysteine + N(6)-ubiquitinyl-[acceptor protein]-L-lysine.. It catalyses the reaction S-ubiquitinyl-[E1 ubiquitin-activating enzyme]-L-cysteine + [E2 ubiquitin-conjugating enzyme]-L-cysteine = [E1 ubiquitin-activating enzyme]-L-cysteine + S-ubiquitinyl-[E2 ubiquitin-conjugating enzyme]-L-cysteine.. It functions in the pathway protein modification; protein ubiquitination. In terms of biological role, catalyzes the covalent attachment of ubiquitin to other proteins. Also acts as an E3 ubiquitin-protein ligase. This is Probable bifunctional E2/E3 enzyme R795 from Acanthamoeba polyphaga (Amoeba).